Consider the following 415-residue polypeptide: Secernin-2 (415 aa).

Residue Cys-8 is part of the active site.

It belongs to the peptidase C69 family. Secernin subfamily.

The chain is Secernin-2 (scrn2) from Danio rerio (Zebrafish).